Reading from the N-terminus, the 498-residue chain is Trichoplein keratin filament-binding protein (498 aa).

Positions Cys-11–Arg-39 form a coiled coil. Glycyl lysine isopeptide (Lys-Gly) (interchain with G-Cter in ubiquitin) cross-links involve residues Lys-50 and Lys-57. 3 coiled-coil regions span residues Ala-66–Glu-136, Val-163–Glu-353, and Leu-380–Thr-479. The segment at Lys-73 to Asn-498 is interaction with keratin proteins. The tract at residues Glu-167–Asn-189 is disordered. Basic and acidic residues predominate over residues Met-168–Asn-189. The segment at Lys-259 to Glu-425 is trichohyalin/plectin homology domain. The disordered stretch occupies residues Gln-447–Asn-498.

The protein belongs to the TCHP family. As to quaternary structure, interacts specifically with keratin proteins including, KRT5, KRT6A, KRT8, KRT14, KRT16 and KRT18. Interacts with KCTD17. In terms of processing, ubiquitinated. Ubiquitination by the BCR(KCTD17) E3 ubiquitin ligase complex results in proteasomal degradation, and induces ciliogenesis. As to expression, expressed at high levels in normal urothelial and breast epithelial cells. Also expressed in the smooth muscle and endothelial cells. Reduced expression seen in advanced bladder and breast carcinomas (at protein level). Ubiquitous. Expressed at highest levels in the heart, skeletal muscle, kidney, liver and testis.

Its subcellular location is the cytoplasm. It is found in the cytoskeleton. It localises to the cell membrane. The protein localises to the mitochondrion. The protein resides in the cell junction. Its subcellular location is the desmosome. It is found in the microtubule organizing center. It localises to the centrosome. Functionally, tumor suppressor which has the ability to inhibit cell growth and be pro-apoptotic during cell stress. Inhibits cell growth in bladder and prostate cancer cells by a down-regulation of HSPB1 by inhibiting its phosphorylation. May act as a 'capping' or 'branching' protein for keratin filaments in the cell periphery. May regulate K8/K18 filament and desmosome organization mainly at the apical or peripheral regions of simple epithelial cells. Is a negative regulator of ciliogenesis. In Homo sapiens (Human), this protein is Trichoplein keratin filament-binding protein.